The sequence spans 455 residues: Gamma-aminobutyric acid receptor subunit alpha-1 (455 aa).

An N-terminal signal peptide occupies residues 1–27; sequence MKRLLVLCDCLWAWSLLLNALTERSYG. Residues 28 to 253 are Extracellular-facing; sequence QTSSQDELKD…FHLKRKIGYF (226 aa). The N-linked (GlcNAc...) asparagine glycan is linked to asparagine 38. Arginine 94 contacts 4-aminobutanoate. N-linked (GlcNAc...) asparagine glycosylation occurs at asparagine 138. Residue threonine 157 participates in 4-aminobutanoate binding. An intrachain disulfide couples cysteine 166 to cysteine 180. Residues 254–274 traverse the membrane as a helical segment; that stretch reads VIQTYLPCIMTVILSQVSFWL. Over 275-279 the chain is Cytoplasmic; sequence NRESV. Residues 280–301 form a helical membrane-spanning segment; it reads PARTVFGVTTVLTMTTLSISAR. The Extracellular portion of the chain corresponds to 302–311; sequence NSLPKVAYAT. A helical membrane pass occupies residues 312–333; that stretch reads AMDWFIAVCYAFVFSALIEFAT. Over 334–420 the chain is Cytoplasmic; sequence VNYFTKRGYA…TFNSVSKIDR (87 aa). The chain crosses the membrane as a helical span at residues 421 to 440; the sequence is LSRIAFPLLFGIFNLVYWAT. Topologically, residues 441-455 are extracellular; that stretch reads YLNREPQLKAPTPHQ.

It belongs to the ligand-gated ion channel (TC 1.A.9) family. Gamma-aminobutyric acid receptor (TC 1.A.9.5) subfamily. GABRA1 sub-subfamily. As to quaternary structure, heteropentamer, formed by a combination of alpha (GABRA1-6), beta (GABRB1-3), gamma (GABRG1-3), delta (GABRD), epsilon (GABRE), rho (GABRR1-3), pi (GABRP) and theta (GABRQ) subunits, each subunit exhibiting distinct physiological and pharmacological properties. As to expression, brain.

It is found in the postsynaptic cell membrane. The protein resides in the cell membrane. It catalyses the reaction chloride(in) = chloride(out). With respect to regulation, allosterically activated by benzodiazepines, the neuroanesthetic alphaxalone and pentobarbital. Inhibited by the antagonist bicuculline. Potentiated by histamine. Its function is as follows. Alpha subunit of the heteropentameric ligand-gated chloride channel gated by gamma-aminobutyric acid (GABA), a major inhibitory neurotransmitter in the brain. GABA-gated chloride channels, also named GABA(A) receptors (GABAAR), consist of five subunits arranged around a central pore and contain GABA active binding site(s) located at the alpha and beta subunit interface(s). When activated by GABA, GABAARs selectively allow the flow of chloride anions across the cell membrane down their electrochemical gradient. Chloride influx into the postsynaptic neuron following GABAAR opening decreases the neuron ability to generate a new action potential, thereby reducing nerve transmission. The GABAARs can also initiate the formation of functional inhibitory GABAergic synapses. GABAARs function also as histamine receptor where histamine binds at the interface of two neighboring beta subunits and potentiates GABA response. The polypeptide is Gamma-aminobutyric acid receptor subunit alpha-1 (GABRA1) (Gallus gallus (Chicken)).